The chain runs to 323 residues: tRNA U34 carboxymethyltransferase (323 aa).

Carboxy-S-adenosyl-L-methionine is bound by residues Lys-91, Trp-105, Lys-110, Gly-130, 152–154, 181–182, Met-196, Tyr-200, and Arg-315; these read DPT and IE.

Belongs to the class I-like SAM-binding methyltransferase superfamily. CmoB family. As to quaternary structure, homotetramer.

The enzyme catalyses carboxy-S-adenosyl-L-methionine + 5-hydroxyuridine(34) in tRNA = 5-carboxymethoxyuridine(34) in tRNA + S-adenosyl-L-homocysteine + H(+). In terms of biological role, catalyzes carboxymethyl transfer from carboxy-S-adenosyl-L-methionine (Cx-SAM) to 5-hydroxyuridine (ho5U) to form 5-carboxymethoxyuridine (cmo5U) at position 34 in tRNAs. The polypeptide is tRNA U34 carboxymethyltransferase (Cronobacter sakazakii (strain ATCC BAA-894) (Enterobacter sakazakii)).